The chain runs to 351 residues: Spermidine/putrescine import ATP-binding protein PotA (351 aa).

Residues 6–236 (LELRNVTKEY…PENAWVANFI (231 aa)) enclose the ABC transporter domain. Residue 38-45 (GPSGCGKT) coordinates ATP.

Belongs to the ABC transporter superfamily. Spermidine/putrescine importer (TC 3.A.1.11.1) family. As to quaternary structure, the complex is composed of two ATP-binding proteins (PotA), two transmembrane proteins (PotB and PotC) and a solute-binding protein (PotD).

It is found in the cell membrane. The enzyme catalyses ATP + H2O + polyamine-[polyamine-binding protein]Side 1 = ADP + phosphate + polyamineSide 2 + [polyamine-binding protein]Side 1.. Functionally, part of the ABC transporter complex PotABCD involved in spermidine/putrescine import. Responsible for energy coupling to the transport system. This chain is Spermidine/putrescine import ATP-binding protein PotA, found in Mycoplasma mycoides subsp. mycoides SC (strain CCUG 32753 / NCTC 10114 / PG1).